The following is a 333-amino-acid chain: Glyceraldehyde-3-phosphate dehydrogenase 1 (333 aa).

NAD(+)-binding positions include 12–13 (RI), D35, and R79. D-glyceraldehyde 3-phosphate contacts are provided by residues 152–154 (SCT), T183, R198, 211–212 (SG), and R234. C153 functions as the Nucleophile in the catalytic mechanism. An NAD(+)-binding site is contributed by N314.

Belongs to the glyceraldehyde-3-phosphate dehydrogenase family. Homotetramer.

Its subcellular location is the cytoplasm. It catalyses the reaction D-glyceraldehyde 3-phosphate + phosphate + NAD(+) = (2R)-3-phospho-glyceroyl phosphate + NADH + H(+). The protein operates within carbohydrate degradation; glycolysis; pyruvate from D-glyceraldehyde 3-phosphate: step 1/5. With respect to regulation, resistant to pentalenolactone (PL). In terms of biological role, catalyzes the oxidative phosphorylation of glyceraldehyde 3-phosphate (G3P) to 1,3-bisphosphoglycerate (BPG) using the cofactor NAD. The first reaction step involves the formation of a hemiacetal intermediate between G3P and a cysteine residue, and this hemiacetal intermediate is then oxidized to a thioester, with concomitant reduction of NAD to NADH. The reduced NADH is then exchanged with the second NAD, and the thioester is attacked by a nucleophilic inorganic phosphate to produce BPG. This Streptomyces arenae protein is Glyceraldehyde-3-phosphate dehydrogenase 1 (gap1).